The primary structure comprises 148 residues: Large ribosomal subunit protein bL9 (148 aa).

This sequence belongs to the bacterial ribosomal protein bL9 family.

Functionally, binds to the 23S rRNA. This chain is Large ribosomal subunit protein bL9, found in Chloroflexus aurantiacus (strain ATCC 29366 / DSM 635 / J-10-fl).